The chain runs to 131 residues: NADPH-dependent 7-cyano-7-deazaguanine reductase (131 aa).

The Thioimide intermediate role is filled by cysteine 48. Aspartate 55 functions as the Proton donor in the catalytic mechanism. Substrate contacts are provided by residues 70–72 (VEL) and 89–90 (QE).

It belongs to the GTP cyclohydrolase I family. QueF type 1 subfamily.

Its subcellular location is the cytoplasm. It catalyses the reaction 7-aminomethyl-7-carbaguanine + 2 NADP(+) = 7-cyano-7-deazaguanine + 2 NADPH + 3 H(+). It functions in the pathway tRNA modification; tRNA-queuosine biosynthesis. In terms of biological role, catalyzes the NADPH-dependent reduction of 7-cyano-7-deazaguanine (preQ0) to 7-aminomethyl-7-deazaguanine (preQ1). The sequence is that of NADPH-dependent 7-cyano-7-deazaguanine reductase from Caldicellulosiruptor bescii (strain ATCC BAA-1888 / DSM 6725 / KCTC 15123 / Z-1320) (Anaerocellum thermophilum).